Here is a 794-residue protein sequence, read N- to C-terminus: Zinc finger protein 148 (794 aa).

A Glycyl lysine isopeptide (Lys-Gly) (interchain with G-Cter in SUMO2) cross-link involves residue lysine 6. Serine 51 carries the post-translational modification Phosphoserine. Residues lysine 88, lysine 115, and lysine 132 each participate in a glycyl lysine isopeptide (Lys-Gly) (interchain with G-Cter in SUMO2) cross-link. A C2H2-type 1 zinc finger spans residues 171 to 193 (HVCEHCNAAFRTNYHLQRHVFIH). Position 194 is a phosphothreonine (threonine 194). C2H2-type zinc fingers lie at residues 199 to 221 (FQCSQCDMRFIQKYLLQRHEKIH) and 227 to 249 (FRCDECGMRFIQKYHMERHKRTH). Serine 250 is subject to Phosphoserine. Residues 255 to 278 (YQCEYCLQYFSRTDRVLKHKRMCH) form a C2H2-type 4 zinc finger. Residue lysine 291 forms a Glycyl lysine isopeptide (Lys-Gly) (interchain with G-Cter in SUMO2) linkage. The tract at residues 298-336 (EEDSGFSTSPKDNSLPKKKRQKTEKKSSGMDKESALDKS) is disordered. Phosphoserine occurs at positions 301 and 306. A Glycyl lysine isopeptide (Lys-Gly) (interchain with G-Cter in SUMO2) cross-link involves residue lysine 308. The span at 321 to 336 (EKKSSGMDKESALDKS) shows a compositional bias: basic and acidic residues. Residue lysine 356 forms a Glycyl lysine isopeptide (Lys-Gly) (interchain with G-Cter in SUMO1); alternate linkage. Residue lysine 356 forms a Glycyl lysine isopeptide (Lys-Gly) (interchain with G-Cter in SUMO2); alternate linkage. A Glycyl lysine isopeptide (Lys-Gly) (interchain with G-Cter in SUMO2) cross-link involves residue lysine 402. Serine 412 is subject to Phosphoserine. Residues lysine 421 and lysine 424 each participate in a glycyl lysine isopeptide (Lys-Gly) (interchain with G-Cter in SUMO2) cross-link. A compositionally biased stretch (polar residues) spans 574–588 (NSSEVPEVTPSENVG). The segment at 574–596 (NSSEVPEVTPSENVGSSSQASSS) is disordered. The residue at position 607 (lysine 607) is an N6-acetyllysine. 2 positions are modified to phosphoserine: serine 665 and serine 784.

It belongs to the krueppel C2H2-type zinc-finger protein family. As to quaternary structure, interacts with HNRNPDL. Interacts with the 5FMC complex; the interaction requires association with CHTOP. Interacts with CAVIN1. Sumoylated with SUMO2. Desumoylated by SENP3, resulting in the stimulation of transcription of its target genes.

The protein localises to the nucleus. Its function is as follows. Involved in transcriptional regulation. Represses the transcription of a number of genes including gastrin, stromelysin and enolase. Binds to the G-rich box in the enhancer region of these genes. In Homo sapiens (Human), this protein is Zinc finger protein 148 (ZNF148).